Consider the following 91-residue polypeptide: Small ribosomal subunit protein bS20 (91 aa).

Over residues 1 to 21 (MPLHKSAEKRLRQSARRNERN) the composition is skewed to basic and acidic residues. Disordered regions lie at residues 1–25 (MPLH…RARK) and 71–91 (NKAS…AQKD).

It belongs to the bacterial ribosomal protein bS20 family.

In terms of biological role, binds directly to 16S ribosomal RNA. The polypeptide is Small ribosomal subunit protein bS20 (Prosthecochloris aestuarii (strain DSM 271 / SK 413)).